An 87-amino-acid polypeptide reads, in one-letter code: RNA-binding protein Hfq (87 aa).

The Sm domain maps to 9-68; sequence DPFLNTLRRERIPVSIYLVNGIKLQGYIESFDQFVILLKNSISQMIYKHAISTVVPNHTN. The segment at 66-87 is disordered; the sequence is HTNNQEHNQSQYNNNNACISKP.

This sequence belongs to the Hfq family. As to quaternary structure, homohexamer.

Functionally, RNA chaperone that binds small regulatory RNA (sRNAs) and mRNAs to facilitate mRNA translational regulation in response to envelope stress, environmental stress and changes in metabolite concentrations. Also binds with high specificity to tRNAs. The sequence is that of RNA-binding protein Hfq from Wigglesworthia glossinidia brevipalpis.